The following is a 604-amino-acid chain: Phenylalanine--tRNA ligase beta subunit (604 aa).

Positions 327-402 (YFQEKREVAH…LGRTLDRFSP (76 aa)) constitute a B5 domain. Aspartate 380, aspartate 386, glutamate 389, and glutamate 390 together coordinate Mg(2+).

The protein belongs to the phenylalanyl-tRNA synthetase beta subunit family. Type 2 subfamily. Tetramer of two alpha and two beta subunits. Mg(2+) serves as cofactor.

The protein resides in the cytoplasm. It catalyses the reaction tRNA(Phe) + L-phenylalanine + ATP = L-phenylalanyl-tRNA(Phe) + AMP + diphosphate + H(+). This is Phenylalanine--tRNA ligase beta subunit from Treponema pallidum subsp. pallidum (strain SS14).